We begin with the raw amino-acid sequence, 196 residues long: MTDVWRLAIFVLMVNVLNDQVSCSGPPGPVGYPGVPGVPGPRGPPGQPGAAGRPGDPGPKGPSVKCPCRERSAFTVKFSGRLPPPSEPVVFTEVLYNTQRDLKESTGVFNCVEPGNYHFSFDVELYHCKVKIGLMKNHIQVMEKHQLSKNEYENASGAMIMPLRQGDKVWLEADVETEEPDQAKVVIYFSGFLISS.

The signal sequence occupies residues 1–23; sequence MTDVWRLAIFVLMVNVLNDQVSC. Positions 25–63 constitute a Collagen-like domain; that stretch reads GPPGPVGYPGVPGVPGPRGPPGQPGAAGRPGDPGPKGPS. The span at 28–47 shows a compositional bias: pro residues; the sequence is GPVGYPGVPGVPGPRGPPGQ. A disordered region spans residues 28–64; the sequence is GPVGYPGVPGVPGPRGPPGQPGAAGRPGDPGPKGPSV. Residues 67 to 196 enclose the C1q domain; the sequence is PCRERSAFTV…IYFSGFLISS (130 aa).

As to expression, plasma; synthesized in the liver.

It localises to the secreted. Its function is as follows. Plasma proteins HP-20, HP-25, HP-27 and HP-55 form a 140 kDa complex via disulfide bonds in the plasma and are hibernation specific. The protein is Hibernation-associated plasma protein HP-20 of Tamias sibiricus (Siberian chipmunk).